The sequence spans 222 residues: Coiled-coil domain-containing protein 70 (222 aa).

The stretch at 129–153 (NALWERDRNLLQEDKALWEEEKALW) forms a coiled coil.

The protein is Coiled-coil domain-containing protein 70 of Homo sapiens (Human).